We begin with the raw amino-acid sequence, 913 residues long: Pentatricopeptide repeat-containing protein At1g10270 (913 aa).

The disordered stretch occupies residues 34-138 (SLSPANEDPE…PNAPRLPDST (105 aa)). Residues 64-73 (DPSQFQIPQN) are compositionally biased toward polar residues. The span at 74–84 (HTPPIPYPPIP) shows a compositional bias: pro residues. The Nuclear localization signal signature appears at 99–108 (ERRRRKRRLR). The span at 108–130 (RIEPPLHALRRDPSAPPPKRDPN) shows a compositional bias: basic and acidic residues. Residues 134-167 (LPDSTSALVGQRLNLHNRVQSLIRASDLDAASKL) form a leucine-zipper region. 11 PPR repeats span residues 179–214 (TVFT…NIVP), 215–250 (NVVS…PFAP), 251–285 (SSVT…GQAA), 286–316 (DSTV…LKSK), 321–355 (DGIV…KFRM), 356–390 (HPPT…HAPP), 396–426 (NSDT…VGSK), 435–469 (DYLG…SLPA), 470–504 (DAPS…NLRV), 505–539 (VADF…EPKP), and 540–574 (DPSI…NVGV). The segment at 607 to 913 (RNAGQSGNTP…QEKKVVELRN (307 aa)) is disordered. Residues 639–649 (WTSQGVVHSNS) are compositionally biased toward polar residues. Low complexity-rich tracts occupy residues 650-666 (GWAN…AYKA) and 673-690 (SWSN…SNQT). The tract at residues 674-858 (WSNTSDNQQQ…TAQQQWSNQT (185 aa)) is 14 X 11 AA approximate tandem repeats of W-x(2)-Q-x(4)-Q-x(2). Over residues 691–700 (AGQQPPSWSR) the composition is skewed to polar residues. A compositionally biased stretch (low complexity) spans 706-727 (QQQQSWSQQSGWSSPSGHQQSW). A compositionally biased stretch (polar residues) spans 728 to 761 (TNQTAGQQQPWANQTPGQQQQWANQTPGQQQQLA). A compositionally biased stretch (low complexity) spans 762-791 (NQTPGQQQQWANQTPGQQQQWANQNNGHQQ). The span at 792 to 814 (PWANQNTGHQQSWANQTPSQQQP) shows a compositional bias: polar residues. Residues 815–845 (WANQTTGQQQGWGNQTTGQQQQWANQTAGQQ) show a composition bias toward low complexity. 2 stretches are compositionally biased toward polar residues: residues 846 to 867 (SGWT…SQWL) and 875 to 894 (ANQT…QQEP). The segment covering 899–913 (ECQETQEKKVVELRN) has biased composition (basic and acidic residues).

Belongs to the PPR family. P subfamily. In terms of assembly, interacts with RPB36B through its WQQ domain. As to expression, ubiquitous but preferentially expressed in gametophytes and young embryos.

The protein localises to the nucleus. May function as a transcriptional regulator essential for early embryogenesis. The chain is Pentatricopeptide repeat-containing protein At1g10270 (GRP23) from Arabidopsis thaliana (Mouse-ear cress).